The chain runs to 240 residues: T-cell antigen CD7 (240 aa).

The first 25 residues, 1–25 (MAGPPRLLLLPLLLALARGLPGALA), serve as a signal peptide directing secretion. One can recognise an Ig-like domain in the interval 26-130 (AQEVQQSPHC…NVYGSGTLVL (105 aa)). Topologically, residues 26-180 (AQEVQQSPHC…PDPPAASALP (155 aa)) are extracellular. Intrachain disulfides connect Cys35-Cys142 and Cys48-Cys114. N-linked (GlcNAc...) asparagine glycans are attached at residues Asn45 and Asn96. Residues 140 to 172 (HRCSDAPPRASALPAPPTGSALPDPQTASALPD) are disordered. 4 consecutive repeat copies span residues 145–153 (APPRASALP), 154–162 (APPTGSALP), 163–171 (DPQTASALP), and 172–180 (DPPAASALP). The segment at 145–180 (APPRASALPAPPTGSALPDPQTASALPDPPAASALP) is 4 X 9 AA tandem repeats, potential spacer function. The chain crosses the membrane as a helical span at residues 181–201 (AALAVISFLLGLGLGVACVLA). The S-palmitoyl cysteine moiety is linked to residue Cys198. The Cytoplasmic segment spans residues 202–240 (RTQIKKLCSWRDKNSAACVVYEDMSHSRCNTLSSPNQYQ).

In terms of assembly, interacts with SECTM1. As to expression, expressed on T-cells and natural killer (NK) cells and their precursors.

It is found in the membrane. Functionally, transmembrane glycoprotein expressed by T-cells and natural killer (NK) cells and their precursors. Plays a costimulatory role in T-cell activation upon binding to its ligand K12/SECTM1. In turn, mediates the production of cytokines such as IL-2. On resting NK-cells, CD7 activation results in a significant induction of interferon-gamma levels. This Homo sapiens (Human) protein is T-cell antigen CD7 (CD7).